The primary structure comprises 80 residues: Conotoxin SmIVA (80 aa).

Residues 1–21 (MGMRMMFTVFLLVVLATTVVS) form the signal peptide. A propeptide spanning residues 22–38 (IPSDRASDGRNAAVNER) is cleaved from the precursor. Position 39 is a pyrrolidone carboxylic acid (Gln39). A glycan (O-linked (HexNAc...) serine) is linked at Ser45. 4-hydroxyproline is present on residues Pro55, Pro60, Pro70, and Pro72. Ser75 carries the serine amide modification. Residues 76-80 (GRRND) constitute a propeptide that is removed on maturation.

This sequence belongs to the conotoxin A superfamily. Contains 3 disulfide bonds. As to expression, expressed by the venom duct.

It is found in the secreted. Neurotoxin with probable activity on sodium channel. Induces intense repetitive firing of the frog neuromuscular junction, leading to a tetanic contracture in muscle fiber (spastic paralysis). In vivo, shows the same effect as the whole venom when injected on fish prey. In Conus stercusmuscarum (Fly-specked cone), this protein is Conotoxin SmIVA.